Here is a 496-residue protein sequence, read N- to C-terminus: Probable cytosol aminopeptidase (496 aa).

Positions 262 and 267 each coordinate Mn(2+). Residue Lys274 is part of the active site. Mn(2+) is bound by residues Asp285, Asp344, and Glu346. Arg348 is a catalytic residue.

Belongs to the peptidase M17 family. Mn(2+) is required as a cofactor.

Its subcellular location is the cytoplasm. The enzyme catalyses Release of an N-terminal amino acid, Xaa-|-Yaa-, in which Xaa is preferably Leu, but may be other amino acids including Pro although not Arg or Lys, and Yaa may be Pro. Amino acid amides and methyl esters are also readily hydrolyzed, but rates on arylamides are exceedingly low.. It carries out the reaction Release of an N-terminal amino acid, preferentially leucine, but not glutamic or aspartic acids.. In terms of biological role, presumably involved in the processing and regular turnover of intracellular proteins. Catalyzes the removal of unsubstituted N-terminal amino acids from various peptides. The sequence is that of Probable cytosol aminopeptidase from Rhizobium etli (strain CIAT 652).